The chain runs to 493 residues: DM7 family protein GM11958 (493 aa).

The tract at residues 434-493 (ATKSTDTRDDGMNTADYQSQFPELEQDSEPEPEPEPEPQTEDEGEDEDIEILASLCSGSI) is disordered. Acidic residues predominate over residues 457–483 (LEQDSEPEPEPEPEPQTEDEGEDEDIE).

This sequence belongs to the DM7 family.

This Drosophila sechellia (Fruit fly) protein is DM7 family protein GM11958.